Consider the following 293-residue polypeptide: NAD kinase (293 aa).

Catalysis depends on aspartate 68, which acts as the Proton acceptor. Residues 68 to 69 (DG), 142 to 143 (ND), arginine 153, aspartate 172, and 183 to 188 (TAYSLS) each bind NAD(+).

Belongs to the NAD kinase family. A divalent metal cation is required as a cofactor.

It is found in the cytoplasm. It carries out the reaction NAD(+) + ATP = ADP + NADP(+) + H(+). In terms of biological role, involved in the regulation of the intracellular balance of NAD and NADP, and is a key enzyme in the biosynthesis of NADP. Catalyzes specifically the phosphorylation on 2'-hydroxyl of the adenosine moiety of NAD to yield NADP. In Lachnospira eligens (strain ATCC 27750 / DSM 3376 / VPI C15-48 / C15-B4) (Eubacterium eligens), this protein is NAD kinase.